A 369-amino-acid polypeptide reads, in one-letter code: MSIDFQQLPHAGIRSLIPYVPGKSIEELAKEKGITDIIKLASNENPLGCSPLALSAIQTMSSHYIATYPSPWNHPLMSKLASYLKVKPEQLFLSNGSDYLFNILLNCFALHTDRHILTHDYAFSTYAIQANSLQIPINSVPIGHNWEVNITDIVNACNQKTGIIFIANPNNPTGVLIQQEEIKYLLEQIPKSTLLVLDEAYYEFAASQLTVNSLDWLEEHPNLVVTRTFSKIYGMAGLRLGYAIANPSIINILKRVQLPFIVNQVALAAAYAAIDDDDFIQSSLKMNNEGMSQLQAGFNELNIKYLPSSCNFLTFDCEEDSMALYNYLLDNGIIVRPLHAYKMNNFIRVTIGTKEQNSRFLTALKNFYL.

Lys-231 carries the N6-(pyridoxal phosphate)lysine modification.

It belongs to the class-II pyridoxal-phosphate-dependent aminotransferase family. Histidinol-phosphate aminotransferase subfamily. As to quaternary structure, homodimer. Pyridoxal 5'-phosphate is required as a cofactor.

It carries out the reaction L-histidinol phosphate + 2-oxoglutarate = 3-(imidazol-4-yl)-2-oxopropyl phosphate + L-glutamate. The protein operates within amino-acid biosynthesis; L-histidine biosynthesis; L-histidine from 5-phospho-alpha-D-ribose 1-diphosphate: step 7/9. This chain is Histidinol-phosphate aminotransferase 2, found in Legionella pneumophila (strain Lens).